We begin with the raw amino-acid sequence, 237 residues long: Phosphoribosylaminoimidazole-succinocarboxamide synthase (237 aa).

Belongs to the SAICAR synthetase family.

The enzyme catalyses 5-amino-1-(5-phospho-D-ribosyl)imidazole-4-carboxylate + L-aspartate + ATP = (2S)-2-[5-amino-1-(5-phospho-beta-D-ribosyl)imidazole-4-carboxamido]succinate + ADP + phosphate + 2 H(+). It participates in purine metabolism; IMP biosynthesis via de novo pathway; 5-amino-1-(5-phospho-D-ribosyl)imidazole-4-carboxamide from 5-amino-1-(5-phospho-D-ribosyl)imidazole-4-carboxylate: step 1/2. The polypeptide is Phosphoribosylaminoimidazole-succinocarboxamide synthase (Listeria innocua serovar 6a (strain ATCC BAA-680 / CLIP 11262)).